The primary structure comprises 178 residues: Large ribosomal subunit protein uL6 (178 aa).

This sequence belongs to the universal ribosomal protein uL6 family. Part of the 50S ribosomal subunit.

This protein binds to the 23S rRNA, and is important in its secondary structure. It is located near the subunit interface in the base of the L7/L12 stalk, and near the tRNA binding site of the peptidyltransferase center. The sequence is that of Large ribosomal subunit protein uL6 from Corynebacterium urealyticum (strain ATCC 43042 / DSM 7109).